The chain runs to 196 residues: Large ribosomal subunit protein uL18 (196 aa).

It belongs to the universal ribosomal protein uL18 family. As to quaternary structure, part of the 50S ribosomal subunit. Contacts the 5S and 23S rRNAs.

Functionally, this is one of the proteins that bind and probably mediate the attachment of the 5S RNA into the large ribosomal subunit, where it forms part of the central protuberance. In Saccharolobus islandicus (strain L.S.2.15 / Lassen #1) (Sulfolobus islandicus), this protein is Large ribosomal subunit protein uL18.